The sequence spans 88 residues: Small ribosomal subunit protein uS17 (88 aa).

Belongs to the universal ribosomal protein uS17 family. In terms of assembly, part of the 30S ribosomal subunit.

One of the primary rRNA binding proteins, it binds specifically to the 5'-end of 16S ribosomal RNA. This chain is Small ribosomal subunit protein uS17, found in Prochlorococcus marinus (strain MIT 9215).